The following is a 269-amino-acid chain: GTP cyclohydrolase FolE2 (269 aa).

The protein belongs to the GTP cyclohydrolase IV family.

It catalyses the reaction GTP + H2O = 7,8-dihydroneopterin 3'-triphosphate + formate + H(+). It participates in cofactor biosynthesis; 7,8-dihydroneopterin triphosphate biosynthesis; 7,8-dihydroneopterin triphosphate from GTP: step 1/1. Its function is as follows. Converts GTP to 7,8-dihydroneopterin triphosphate. The polypeptide is GTP cyclohydrolase FolE2 (Thiobacillus denitrificans (strain ATCC 25259 / T1)).